A 207-amino-acid chain; its full sequence is Small ribosomal subunit protein uS10m (207 aa).

Residues 1–24 (MLSVFGLRTVARCNSTLASGGARA) constitute a mitochondrion transit peptide.

Belongs to the universal ribosomal protein uS10 family. As to quaternary structure, part of the mitochondrial small ribosomal subunit.

Its subcellular location is the mitochondrion. Involved in mitochondrial genome encoded proteins translation. Involved in the binding of tRNA to the ribosomes. This Eremothecium gossypii (strain ATCC 10895 / CBS 109.51 / FGSC 9923 / NRRL Y-1056) (Yeast) protein is Small ribosomal subunit protein uS10m (RSM10).